The primary structure comprises 160 residues: Phosphopantetheine adenylyltransferase (160 aa).

Residue Ser10 participates in substrate binding. ATP-binding positions include 10-11 and His18; that span reads SF. Substrate-binding residues include Lys42, Thr74, and Arg88. ATP contacts are provided by residues 89 to 91, Glu99, and 124 to 130; these read GLR and YSFVSST.

It belongs to the bacterial CoaD family. In terms of assembly, homohexamer. Mg(2+) is required as a cofactor.

The protein resides in the cytoplasm. The enzyme catalyses (R)-4'-phosphopantetheine + ATP + H(+) = 3'-dephospho-CoA + diphosphate. The protein operates within cofactor biosynthesis; coenzyme A biosynthesis; CoA from (R)-pantothenate: step 4/5. Its function is as follows. Reversibly transfers an adenylyl group from ATP to 4'-phosphopantetheine, yielding dephospho-CoA (dPCoA) and pyrophosphate. The chain is Phosphopantetheine adenylyltransferase from Leptospira biflexa serovar Patoc (strain Patoc 1 / Ames).